The sequence spans 120 residues: MREKPKYLPPTLREKHRYIAFQLIGERPFRKDEVKKAIWEASLSTLGVLGSAKAKPWFIRFDEKSQTGIVRVDRKHVEELRFALTLVTEINGSKAIFRTLGVSGTIKRLKRKFLAEFGWR.

Belongs to the eukaryotic/archaeal RNase P protein component 2 family. As to quaternary structure, consists of a catalytic RNA component and at least 4-5 protein subunits.

It is found in the cytoplasm. It catalyses the reaction Endonucleolytic cleavage of RNA, removing 5'-extranucleotides from tRNA precursor.. Part of ribonuclease P, a protein complex that generates mature tRNA molecules by cleaving their 5'-ends. This chain is Ribonuclease P protein component 2, found in Thermococcus gammatolerans (strain DSM 15229 / JCM 11827 / EJ3).